The sequence spans 667 residues: Sterile alpha motif domain-containing protein 15 (667 aa).

Residues 1-18 (MAEVPEDYDSGPDEDGEP) are compositionally biased toward acidic residues. 2 disordered regions span residues 1 to 108 (MAEV…KSER) and 147 to 424 (SAME…IKSK). Basic and acidic residues-rich tracts occupy residues 19 to 53 (ESER…HEPQ), 84 to 93 (IAKESKRDVP), 187 to 196 (ESLRVQHEET), and 228 to 266 (TKPD…KSSE). Acidic residues predominate over residues 268–277 (AGLEPPEETQ). 4 stretches are compositionally biased toward basic and acidic residues: residues 284 to 314 (MQRK…KSTD), 322 to 338 (EEIK…KPNE), 346 to 364 (EMMK…EEKN), and 381 to 422 (PRVE…EPIK). In terms of domain architecture, SAM spans 538 to 601 (WDPEKVAEWI…SRHTRELLEI (64 aa)).

This is Sterile alpha motif domain-containing protein 15 (SAMD15) from Macaca fascicularis (Crab-eating macaque).